We begin with the raw amino-acid sequence, 678 residues long: Translation factor GUF1 homolog, chloroplastic (678 aa).

The transit peptide at 1 to 43 directs the protein to the chloroplast; the sequence is MASILLSLNTHTLLPLHTRTRTTKTTLKILRFSHKLPPSSPFY. The tr-type G domain maps to 81 to 262; the sequence is KNIRNFCIIA…AIVERVPPPR (182 aa). Residues 90–97, 155–159, and 209–212 contribute to the GTP site; these read AHIDHGKS, DTPGH, and NKID.

This sequence belongs to the TRAFAC class translation factor GTPase superfamily. Classic translation factor GTPase family. LepA subfamily.

Its subcellular location is the plastid. The protein localises to the chloroplast. The catalysed reaction is GTP + H2O = GDP + phosphate + H(+). In terms of biological role, promotes chloroplast protein synthesis. May act as a fidelity factor of the translation reaction, by catalyzing a one-codon backward translocation of tRNAs on improperly translocated ribosomes. The protein is Translation factor GUF1 homolog, chloroplastic of Populus trichocarpa (Western balsam poplar).